The following is a 471-amino-acid chain: G2/mitotic-specific cyclin-1 (471 aa).

The protein belongs to the cyclin family. Cyclin AB subfamily.

Its function is as follows. Essential for the control of the cell cycle at the G2/M (mitosis) transition. Interacts with the CDC2 protein kinase to form MPF. G2/M cyclins accumulate steadily during G2 and are abruptly destroyed at mitosis. The polypeptide is G2/mitotic-specific cyclin-1 (CLB1) (Saccharomyces cerevisiae (strain ATCC 204508 / S288c) (Baker's yeast)).